The primary structure comprises 26 residues: Delta-conotoxin Am2766 (26 aa).

3 cysteine pairs are disulfide-bonded: Cys-1–Cys-16, Cys-8–Cys-20, and Cys-15–Cys-24. Position 26 is a glutamic acid 1-amide (Glu-26).

In terms of tissue distribution, expressed by the venom duct.

It localises to the secreted. Delta-conotoxins bind to site 6 of voltage-gated sodium channels (Nav) and inhibit the inactivation process. The chain is Delta-conotoxin Am2766 from Conus amadis (Amadis cone).